The chain runs to 177 residues: Dual-action ribosomal maturation protein DarP (177 aa).

The protein belongs to the DarP family.

The protein localises to the cytoplasm. Member of a network of 50S ribosomal subunit biogenesis factors which assembles along the 30S-50S interface, preventing incorrect 23S rRNA structures from forming. Promotes peptidyl transferase center (PTC) maturation. The protein is Dual-action ribosomal maturation protein DarP of Histophilus somni (strain 129Pt) (Haemophilus somnus).